Here is an 801-residue protein sequence, read N- to C-terminus: Phenylalanine--tRNA ligase beta subunit (801 aa).

In terms of domain architecture, tRNA-binding spans 39–147; that stretch reads GGGLDQVVVA…SDLPLGVPLF (109 aa). Residues 401-477 form the B5 domain; that stretch reads VSHRTIRFRV…RLNGYDRIET (77 aa). Mg(2+) contacts are provided by D455, D461, E464, and E465. The FDX-ACB domain maps to 708-801; it reads SRFPDTFRDI…LVAKLGATIR (94 aa).

The protein belongs to the phenylalanyl-tRNA synthetase beta subunit family. Type 1 subfamily. In terms of assembly, tetramer of two alpha and two beta subunits. Mg(2+) serves as cofactor.

Its subcellular location is the cytoplasm. It catalyses the reaction tRNA(Phe) + L-phenylalanine + ATP = L-phenylalanyl-tRNA(Phe) + AMP + diphosphate + H(+). This chain is Phenylalanine--tRNA ligase beta subunit, found in Geobacter sulfurreducens (strain ATCC 51573 / DSM 12127 / PCA).